The following is a 534-amino-acid chain: Cytochrome c oxidase subunit 1 (534 aa).

Residues 16 to 36 (VLYFIFSVFCGMAGTGMSMII) traverse the membrane as a helical segment. 2 residues coordinate Ca(2+): glutamate 39 and glycine 44. Histidine 62 is a binding site for Fe(II)-heme a. The next 6 helical transmembrane spans lie at 64 to 84 (ILMV…NYLL), 101 to 121 (ISFW…LVES), 147 to 167 (AIFA…NFIV), 183 to 203 (PLFV…LPVL), 235 to 255 (LFWF…FGVI), and 267 to 287 (VFGE…GFLV). Histidine 241 provides a ligand contact to Cu cation. The segment at residues 241–245 (HPEVY) is a cross-link (1'-histidyl-3'-tyrosine (His-Tyr)). Residue tyrosine 245 coordinates O2. 2 residues coordinate Cu cation: histidine 290 and histidine 291. The next 2 helical transmembrane spans lie at 310-330 (MIIA…IYGG) and 338-358 (MMYA…GVAL). Residues histidine 368 and aspartate 369 each coordinate Mg(2+). Transmembrane regions (helical) follow at residues 372–392 (YVVA…MFAG) and 414–434 (FWLI…LGIN). Histidine 376 is a binding site for heme a3. Histidine 378 provides a ligand contact to Fe(II)-heme a. Proline 441 is a Ca(2+) binding site. The chain crosses the membrane as a helical span at residues 453–473 (VSSIGSFIAMISLILFIYILF).

This sequence belongs to the heme-copper respiratory oxidase family. Component of the cytochrome c oxidase (complex IV, CIV), a multisubunit enzyme composed of a catalytic core of 3 subunits and several supernumerary subunits. The complex exists as a monomer or a dimer and forms supercomplexes (SCs) in the inner mitochondrial membrane with ubiquinol-cytochrome c oxidoreductase (cytochrome b-c1 complex, complex III, CIII). Requires heme as cofactor. The cofactor is Cu cation.

The protein resides in the mitochondrion inner membrane. The enzyme catalyses 4 Fe(II)-[cytochrome c] + O2 + 8 H(+)(in) = 4 Fe(III)-[cytochrome c] + 2 H2O + 4 H(+)(out). It participates in energy metabolism; oxidative phosphorylation. Component of the cytochrome c oxidase, the last enzyme in the mitochondrial electron transport chain which drives oxidative phosphorylation. The respiratory chain contains 3 multisubunit complexes succinate dehydrogenase (complex II, CII), ubiquinol-cytochrome c oxidoreductase (cytochrome b-c1 complex, complex III, CIII) and cytochrome c oxidase (complex IV, CIV), that cooperate to transfer electrons derived from NADH and succinate to molecular oxygen, creating an electrochemical gradient over the inner membrane that drives transmembrane transport and the ATP synthase. Cytochrome c oxidase is the component of the respiratory chain that catalyzes the reduction of oxygen to water. Electrons originating from reduced cytochrome c in the intermembrane space (IMS) are transferred via the dinuclear copper A center (CU(A)) of subunit 2 and heme A of subunit 1 to the active site in subunit 1, a binuclear center (BNC) formed by heme A3 and copper B (CU(B)). The BNC reduces molecular oxygen to 2 water molecules using 4 electrons from cytochrome c in the IMS and 4 protons from the mitochondrial matrix. This is Cytochrome c oxidase subunit 1 (COX1) from Vanderwaltozyma polyspora (strain ATCC 22028 / DSM 70294 / BCRC 21397 / CBS 2163 / NBRC 10782 / NRRL Y-8283 / UCD 57-17) (Kluyveromyces polysporus).